Consider the following 702-residue polypeptide: Phosphoglycerol transferase I (702 aa).

Transmembrane regions (helical) follow at residues His2–Leu22, Phe71–Leu91, and Gly103–Leu123.

It belongs to the OpgB family.

The protein resides in the cell inner membrane. It catalyses the reaction a phosphatidylglycerol + a membrane-derived-oligosaccharide D-glucose = a 1,2-diacyl-sn-glycerol + a membrane-derived-oligosaccharide 6-(glycerophospho)-D-glucose.. The protein operates within glycan metabolism; osmoregulated periplasmic glucan (OPG) biosynthesis. Transfers a phosphoglycerol residue from phosphatidylglycerol to the membrane-bound nascent glucan backbones. This Xanthomonas euvesicatoria pv. vesicatoria (strain 85-10) (Xanthomonas campestris pv. vesicatoria) protein is Phosphoglycerol transferase I.